The chain runs to 722 residues: Polyribonucleotide nucleotidyltransferase (722 aa).

Mg(2+) contacts are provided by Asp487 and Asp493. One can recognise a KH domain in the interval 554-613 (PRIETFKIPTDKIREVIGTGGKVIREIVEKTGAKVNIEDDGTVKVASSDGESIKAAIKWI). The 69-residue stretch at 623–691 (GEIYEGTVVK…DRGKTRLSMK (69 aa)) folds into the S1 motif domain. The tract at residues 697–722 (TGEDLEAKQKAEAKAEGEAPAQAAGE) is disordered. Positions 701–713 (LEAKQKAEAKAEG) are enriched in basic and acidic residues.

The protein belongs to the polyribonucleotide nucleotidyltransferase family. Requires Mg(2+) as cofactor.

It is found in the cytoplasm. The enzyme catalyses RNA(n+1) + phosphate = RNA(n) + a ribonucleoside 5'-diphosphate. Involved in mRNA degradation. Catalyzes the phosphorolysis of single-stranded polyribonucleotides processively in the 3'- to 5'-direction. The polypeptide is Polyribonucleotide nucleotidyltransferase (Rhodopseudomonas palustris (strain ATCC BAA-98 / CGA009)).